The chain runs to 246 residues: Acetoacetate decarboxylase (246 aa).

Lysine 116 (schiff-base intermediate with acetoacetate) is an active-site residue.

The protein belongs to the ADC family.

The catalysed reaction is acetoacetate + H(+) = acetone + CO2. Catalyzes the conversion of acetoacetate to acetone and carbon dioxide. The polypeptide is Acetoacetate decarboxylase (Burkholderia mallei (strain NCTC 10247)).